The primary structure comprises 232 residues: Single-stranded DNA-binding protein (232 aa).

Acidic residues-rich tracts occupy residues 190 to 200 and 216 to 232; these read GEDEWADEVED and EWQE…DEDF. The tract at residues 190-232 is disordered; sequence GEDEWADEVEDGGYTASESRQSRDEQEWQEDEHEETPDDDEDF. Residues 213 to 232 are dimerization and interaction with the viral DNA polymerase and helicase; the sequence is DEQEWQEDEHEETPDDDEDF.

This sequence belongs to the Teseptimavirus single-stranded DNA-binding protein family. In terms of assembly, homodimer. Interacts (via C-terminus) with the viral DNA polymerase. Interacts with the viral helicase/primase. Part of the replicase complex that includes the DNA polymerase, the primase/helicase and the single-stranded DNA binding protein.

Single-stranded DNA-binding protein that participates in viral DNA replication, formation of concatemers, recombination and repair of double-stranded breaks. Coats the lagging-strand ssDNA as the replication fork advances and stimulates the activities of viral DNA polymerase and primase/helicase. Coordinates simultaneous synthesis of leading- and lagging-strands. Together with DNA primase/helicase, promotes pairing of two homologous DNA molecules containing complementary single-stranded regions and mediates homologous DNA strand exchange. Also promotes the formation of joint molecules. Disrupts loops, hairpins and other secondary structures present on ssDNA to reduce and eliminate pausing of viral DNA polymerase at specific sites during elongation. This is Single-stranded DNA-binding protein (2.5) from Enterobacteria phage T3 (Bacteriophage T3).